A 119-amino-acid polypeptide reads, in one-letter code: Large ribosomal subunit protein bL19 (119 aa).

This sequence belongs to the bacterial ribosomal protein bL19 family.

Its function is as follows. This protein is located at the 30S-50S ribosomal subunit interface and may play a role in the structure and function of the aminoacyl-tRNA binding site. The chain is Large ribosomal subunit protein bL19 from Pseudoalteromonas atlantica (strain T6c / ATCC BAA-1087).